A 185-amino-acid polypeptide reads, in one-letter code: Photosystem I assembly protein Ycf4 (185 aa).

The next 2 helical transmembrane spans lie at 21–43 (NFFW…ASSY) and 63–85 (GVVM…CTIL).

The protein belongs to the Ycf4 family.

It localises to the plastid. The protein resides in the chloroplast thylakoid membrane. Its function is as follows. Seems to be required for the assembly of the photosystem I complex. The sequence is that of Photosystem I assembly protein Ycf4 from Saccharum hybrid (Sugarcane).